We begin with the raw amino-acid sequence, 93 residues long: Ribonuclease P protein component 1 (93 aa).

Belongs to the eukaryotic/archaeal RNase P protein component 1 family. In terms of assembly, consists of a catalytic RNA component and at least 4-5 protein subunits.

It is found in the cytoplasm. The catalysed reaction is Endonucleolytic cleavage of RNA, removing 5'-extranucleotides from tRNA precursor.. Its function is as follows. Part of ribonuclease P, a protein complex that generates mature tRNA molecules by cleaving their 5'-ends. The protein is Ribonuclease P protein component 1 of Methanothermobacter thermautotrophicus (strain ATCC 29096 / DSM 1053 / JCM 10044 / NBRC 100330 / Delta H) (Methanobacterium thermoautotrophicum).